We begin with the raw amino-acid sequence, 161 residues long: Cyclic pyranopterin monophosphate synthase (161 aa).

Substrate is bound by residues 75–77 (LCH) and 113–114 (ME). Asp128 is an active-site residue.

The protein belongs to the MoaC family. In terms of assembly, homohexamer; trimer of dimers.

The catalysed reaction is (8S)-3',8-cyclo-7,8-dihydroguanosine 5'-triphosphate = cyclic pyranopterin phosphate + diphosphate. Its pathway is cofactor biosynthesis; molybdopterin biosynthesis. Its function is as follows. Catalyzes the conversion of (8S)-3',8-cyclo-7,8-dihydroguanosine 5'-triphosphate to cyclic pyranopterin monophosphate (cPMP). The polypeptide is Cyclic pyranopterin monophosphate synthase (Shigella sonnei (strain Ss046)).